Reading from the N-terminus, the 516-residue chain is Acetylcholine receptor subunit delta (516 aa).

The N-terminal stretch at 1–21 is a signal peptide; sequence MEGSVLTLVLLAALVVCGSWG. Residues 22 to 244 are Extracellular-facing; that stretch reads LNEEERLIRH…VTFYLIIRRK (223 aa). N-linked (GlcNAc...) asparagine glycosylation is found at Asn-96 and Asn-163. Cys-150 and Cys-164 are oxidised to a cystine. Transmembrane regions (helical) follow at residues 245–269, 279–296, and 311–332; these read PLFY…VFYL, MAIS…LISK, and FLLF…VLNI. The Cytoplasmic portion of the chain corresponds to 333-470; the sequence is HFRTPSTHVL…WNRVARTVDR (138 aa). Tyr-389 is subject to Phosphotyrosine; by Tyr-kinases. A helical membrane pass occupies residues 471-493; the sequence is LCLFVVTPIMVVGTAWIFLQGAY.

This sequence belongs to the ligand-gated ion channel (TC 1.A.9) family. Acetylcholine receptor (TC 1.A.9.1) subfamily. Delta/CHRND sub-subfamily. As to quaternary structure, pentamer of two alpha chains, and one each of the beta, delta, and gamma (in immature muscle) or epsilon (in mature muscle) chains. The muscle heteropentamer composed of alpha-1, beta-1, delta, epsilon subunits interacts with the alpha-conotoxin ImII.

It is found in the postsynaptic cell membrane. The protein resides in the cell membrane. It catalyses the reaction K(+)(in) = K(+)(out). The catalysed reaction is Na(+)(in) = Na(+)(out). In terms of biological role, after binding acetylcholine, the AChR responds by an extensive change in conformation that affects all subunits and leads to opening of an ion-conducting channel across the plasma membrane. This chain is Acetylcholine receptor subunit delta (CHRND), found in Bos taurus (Bovine).